Reading from the N-terminus, the 279-residue chain is Large ribosomal subunit protein uL2 (279 aa).

Disordered stretches follow at residues 32-58 and 223-279; these read SLLT…GGGH and GVAM…RKRG. Basic residues-rich tracts occupy residues 40-58 and 269-279; these read KGGR…GGGH and VRRRYATRKRG.

Belongs to the universal ribosomal protein uL2 family. As to quaternary structure, part of the 50S ribosomal subunit. Forms a bridge to the 30S subunit in the 70S ribosome.

Its function is as follows. One of the primary rRNA binding proteins. Required for association of the 30S and 50S subunits to form the 70S ribosome, for tRNA binding and peptide bond formation. It has been suggested to have peptidyltransferase activity; this is somewhat controversial. Makes several contacts with the 16S rRNA in the 70S ribosome. This Salinispora tropica (strain ATCC BAA-916 / DSM 44818 / JCM 13857 / NBRC 105044 / CNB-440) protein is Large ribosomal subunit protein uL2.